We begin with the raw amino-acid sequence, 137 residues long: Profilin-3 (137 aa).

It belongs to the profilin family. As to quaternary structure, interacts with ACTRT3.

It is found in the cytoplasm. The protein localises to the cytoskeleton. Its subcellular location is the nucleus. Functionally, binds to actin and affects the structure of the cytoskeleton. Binds to poly-L-proline, phosphatidylinositol 3-phosphate (PtdIns(3)P), phosphatidylinositol 4,5-bisphosphate (PtdIns(4,5)P2) and phosphatidylinositol 4-phosphate (PtdIns(4)P). Slightly reduces actin polymerization. May be involved in spermatogenesis. In Bos taurus (Bovine), this protein is Profilin-3 (PFN3).